The following is a 359-amino-acid chain: Heat-inducible transcription repressor HrcA (359 aa).

This sequence belongs to the HrcA family.

Its function is as follows. Negative regulator of class I heat shock genes (grpE-dnaK-dnaJ and groELS operons). Prevents heat-shock induction of these operons. In Roseiflexus castenholzii (strain DSM 13941 / HLO8), this protein is Heat-inducible transcription repressor HrcA.